Here is a 246-residue protein sequence, read N- to C-terminus: Transmembrane and ubiquitin-like domain-containing protein 1 (246 aa).

The required to release iHOPS from membranes stretch occupies residues 2–30; that stretch reads TLIEGVGDEVTVLFSVLACLLVLALAWVS. Residues 11–31 traverse the membrane as a helical segment; it reads VTVLFSVLACLLVLALAWVST. The interval 34–101 is disordered; the sequence is AEGGDPLPQP…TPPAPDSPQE (68 aa). The span at 40 to 50 shows a compositional bias: pro residues; it reads LPQPSGTPTPS. Thr-71 carries the phosphothreonine modification. A Phosphoserine modification is found at Ser-73. Thr-92 bears the Phosphothreonine mark. Ser-98 and Ser-127 each carry phosphoserine. Residues 103 to 176 enclose the Ubiquitin-like domain; it reads LVLRLKFLND…LHCHVSTRVG (74 aa). 2 helical membrane passes run 195 to 215 and 221 to 241; these read IGSLLLPLLLLLLLLLWYCQI and FPLTATLGLAGFTLLLSLLAF.

Interacts with EEF1A1, GRIA2, GRIP1, CAMLG, TUBG1. Interacts with NPM1 and CDKN2A; TMUB1 can enhance interaction between NPM1 and CDKN2A and is proposed to bridge the proteins; proposed to be mediated by iHOPS. Interacts with ERLIN2 and AMFR; TMUB1 promotes the interaction of ERLIN2 with AMFR. Post-translationally, processed by regulated intramembrane proteolysis (RIP)in the N-terminus to release iHOPS from membranes. Ubiquitously expressed with highest levels in mammary and thyroid glands, bone marrow and spleen; limited expression in cardiac, pancreatic and ovarian tissues.

It is found in the membrane. It localises to the postsynaptic cell membrane. The protein localises to the recycling endosome. Its subcellular location is the cytoplasm. The protein resides in the nucleus. It is found in the nucleolus. It localises to the cytoskeleton. The protein localises to the microtubule organizing center. Its subcellular location is the centrosome. Involved in sterol-regulated ubiquitination and degradation of HMG-CoA reductase HMGCR. Involved in positive regulation of AMPA-selective glutamate receptor GRIA2 recycling to the cell surface. Acts as a negative regulator of hepatocyte growth during regeneration. Functionally, may contribute to the regulation of translation during cell-cycle progression. May contribute to the regulation of cell proliferation. May be involved in centrosome assembly. Modulates stabilization and nucleolar localization of tumor suppressor CDKN2A and enhances association between CDKN2A and NPM1. The chain is Transmembrane and ubiquitin-like domain-containing protein 1 (TMUB1) from Homo sapiens (Human).